We begin with the raw amino-acid sequence, 848 residues long: ATP-dependent RNA helicase dbp10 (848 aa).

Residues 22–43 (DIATDNQKDKHENVGENVSDED) are disordered. The short motif at 69–97 (SNFQSMGLNQTLLRAIFKKGFKAPTPIQR) is the Q motif element. Residues 100-272 (IPLLLEGRDV…KAGLQDPVLV (173 aa)) form the Helicase ATP-binding domain. Position 113–120 (113–120 (ARTGSGKT)) interacts with ATP. The DEAD box motif lies at 220 to 223 (DEAD). In terms of domain architecture, Helicase C-terminal spans 330–480 (RKRALELALK…TSSKQVKTDS (151 aa)). Residues 610–650 (NKVKPKGIKSEVASDKITDSSPGNMSEASESELEEVFKNPK) are disordered. Over residues 617 to 627 (IKSEVASDKIT) the composition is skewed to basic and acidic residues. The span at 628–637 (DSSPGNMSEA) shows a compositional bias: polar residues. A phosphoserine mark is found at S638, S733, and S736. The disordered stretch occupies residues 768 to 813 (ANDSPIRENKRYKHNKLQTPKPADKFRDNYHKQNKRNREAKERGIG). Residues 789-812 (PADKFRDNYHKQNKRNREAKERGI) are compositionally biased toward basic and acidic residues.

The protein belongs to the DEAD box helicase family. DDX54/DBP10 subfamily.

Its subcellular location is the nucleus. It is found in the nucleolus. It carries out the reaction ATP + H2O = ADP + phosphate + H(+). Functionally, ATP-binding RNA helicase involved in the biogenesis of 60S ribosomal subunits and is required for the normal formation of 25S and 5.8S rRNAs. This is ATP-dependent RNA helicase dbp10 (dbp10) from Schizosaccharomyces pombe (strain 972 / ATCC 24843) (Fission yeast).